The primary structure comprises 414 residues: Meiotic driver wtf19 (414 aa).

Residues 1–94 (MKNKYYPVRT…RENHSSGTAD (94 aa)) are disordered. The span at 11–29 (SMDEMNAKNDNEIDLEKGP) shows a compositional bias: basic and acidic residues. The segment covering 57–72 (GANNPNLFNTDESTTP) has biased composition (polar residues). A run of 9 helical transmembrane segments spans residues 99 to 119 (FLIK…PAVC), 136 to 156 (WVYF…LWCF), 170 to 190 (VTVI…AQCV), 192 to 212 (VTAI…AQCV), 222 to 242 (CVKV…IGLF), 247 to 267 (EMMI…FGCV), 284 to 304 (TISA…WTLW), 311 to 331 (LQVL…MSLF), and 339 to 359 (GYEI…LYEM).

Belongs to the WTF family. In terms of assembly, homomer. Forms protein aggregates. The two isoforms can interact with each other and with themselves. High sequence similarity is required for their interaction.

The protein localises to the spore membrane. It localises to the vacuole membrane. It is found in the ascus epiplasm. The protein resides in the cytoplasm. Its subcellular location is the endoplasmic reticulum membrane. Functionally, promotes unequal transmission of alleles from the parental zygote to progeny spores by acting as poison/antidote system where the poison and antidote proteins are produced from the same locus; the poison component is trans-acting and targets all spores within an ascus whereas the antidote component is spore-specific, leading to poisoning of all progeny that do not inherit the allele. Its function is as follows. Localizes isoform 2 to the vacuole thereby facilitating its degradation. Forms toxic aggregates that disrupt spore maturation. In Schizosaccharomyces kambucha (Fission yeast), this protein is Meiotic driver wtf19.